The chain runs to 231 residues: Orotidine 5'-phosphate decarboxylase (231 aa).

Substrate is bound by residues Asp-11, Lys-33, 60-69, Thr-120, Arg-181, Gln-190, Gly-210, and Arg-211; that span reads DLKFHDIPNT. The Proton donor role is filled by Lys-62.

It belongs to the OMP decarboxylase family. Type 1 subfamily. In terms of assembly, homodimer.

It carries out the reaction orotidine 5'-phosphate + H(+) = UMP + CO2. Its pathway is pyrimidine metabolism; UMP biosynthesis via de novo pathway; UMP from orotate: step 2/2. Its function is as follows. Catalyzes the decarboxylation of orotidine 5'-monophosphate (OMP) to uridine 5'-monophosphate (UMP). This chain is Orotidine 5'-phosphate decarboxylase, found in Vibrio atlanticus (strain LGP32) (Vibrio splendidus (strain Mel32)).